The chain runs to 450 residues: IMP-specific 5'-nucleotidase 1 (450 aa).

His144 contributes to the ATP binding site. Asp172 (nucleophile) is an active-site residue. Residues Asp172, Asp174, Asp180, Thr208, Asp376, and Lys384 each contribute to the IMP site. Positions 172 and 174 each coordinate Mg(2+). Catalysis depends on Asp174, which acts as the Proton donor. Asp411 lines the Mg(2+) pocket.

The protein belongs to the ISN1 family. In terms of assembly, homotetramer. Requires Mg(2+) as cofactor.

It catalyses the reaction IMP + H2O = inosine + phosphate. With respect to regulation, allosterically activated by ATP. ATP binding is a prerequisite to magnesium and substrate binding. ATP binds to 2 of the subunits in the homotetramer inducing a closure of these 2 subunits and the release of the C-terminal loop, thereby activating the enzyme. IMP-specific 5'-nucleotidase involved in IMP (inosine 5'-phosphate) degradation. This chain is IMP-specific 5'-nucleotidase 1 (ISN1), found in Saccharomyces cerevisiae (strain ATCC 204508 / S288c) (Baker's yeast).